The following is a 217-amino-acid chain: TPA-induced transmembrane protein (217 aa).

A disordered region spans residues 1 to 37; it reads MDLAQPSQPVDELELSVLERQPEENTPLNGADKVFPS. A helical membrane pass occupies residues 66–86; it reads LWMIITSIFLGVITVIIIGLC.

As to quaternary structure, interacts with LIPH. In terms of tissue distribution, detected predominantly in the skin, with strongest expression in the inner root sheath of the hair follicle.

Its subcellular location is the endoplasmic reticulum. The protein localises to the cell membrane. Its function is as follows. Has a role in LIPH-mediated synthesis of 2-acyl lysophosphatidic acid (LPA). LPA is a bioactive lipid mediator involved in different biological processes, and necessary to promote hair formation and growth. The polypeptide is TPA-induced transmembrane protein (TTMP) (Homo sapiens (Human)).